Here is a 727-residue protein sequence, read N- to C-terminus: Putative ATP-dependent RNA helicase DHX15 (727 aa).

Residues 1-41 are disordered; sequence MSKRKHESSDSNKKAMKKQQNKIEEEEEEITNTTTTTTTTN. The segment covering 31 to 41 has biased composition (low complexity); it reads TNTTTTTTTTN. A Helicase ATP-binding domain is found at 87 to 251; it reads IKVIKENQVV…FENAPLIKVP (165 aa). 100–107 provides a ligand contact to ATP; the sequence is GETGSGKT. A DEAH box motif is present at residues 198-201; sequence DEAH. Positions 273–445 constitute a Helicase C-terminal domain; the sequence is AVRTVIDIHT…SVVLQLLKLG (173 aa).

It belongs to the DEAD box helicase family. DEAH subfamily. DDX15/PRP43 sub-subfamily.

It is found in the nucleus. It carries out the reaction ATP + H2O = ADP + phosphate + H(+). Functionally, pre-mRNA processing factor involved in disassembly of spliceosomes after the release of mature mRNA. The polypeptide is Putative ATP-dependent RNA helicase DHX15 (dhx15) (Dictyostelium discoideum (Social amoeba)).